Reading from the N-terminus, the 173-residue chain is Co-chaperone protein HscB homolog (173 aa).

In terms of domain architecture, J spans 5-77 (CHYALFDLQP…PRRARYLLAI (73 aa)).

Belongs to the HscB family. As to quaternary structure, interacts with HscA and stimulates its ATPase activity.

In terms of biological role, co-chaperone involved in the maturation of iron-sulfur cluster-containing proteins. Seems to help targeting proteins to be folded toward HscA. The protein is Co-chaperone protein HscB homolog of Pseudomonas putida (strain GB-1).